The chain runs to 285 residues: Dermonecrotic toxin LiSicTox-alphaIA2aii (285 aa).

The propeptide occupies 1-5 (DVEER). His-17 is an active-site residue. 2 residues coordinate Mg(2+): Glu-37 and Asp-39. Residue His-53 is the Nucleophile of the active site. Intrachain disulfides connect Cys-57-Cys-63 and Cys-59-Cys-202. A Mg(2+)-binding site is contributed by Asp-97. A glycan (N-linked (GlcNAc...) asparagine) is linked at Asn-262.

Belongs to the arthropod phospholipase D family. Class II subfamily. Class IIa sub-subfamily. Mg(2+) is required as a cofactor. As to expression, expressed by the venom gland.

It localises to the secreted. It catalyses the reaction an N-(acyl)-sphingosylphosphocholine = an N-(acyl)-sphingosyl-1,3-cyclic phosphate + choline. The catalysed reaction is an N-(acyl)-sphingosylphosphoethanolamine = an N-(acyl)-sphingosyl-1,3-cyclic phosphate + ethanolamine. It carries out the reaction a 1-acyl-sn-glycero-3-phosphocholine = a 1-acyl-sn-glycero-2,3-cyclic phosphate + choline. The enzyme catalyses a 1-acyl-sn-glycero-3-phosphoethanolamine = a 1-acyl-sn-glycero-2,3-cyclic phosphate + ethanolamine. In terms of biological role, dermonecrotic toxins cleave the phosphodiester linkage between the phosphate and headgroup of certain phospholipids (sphingolipid and lysolipid substrates), forming an alcohol (often choline) and a cyclic phosphate. This toxin acts on sphingomyelin (SM) with high activity. It may also act on ceramide phosphoethanolamine (CPE), lysophosphatidylcholine (LPC) and lysophosphatidylethanolamine (LPE), but not on lysophosphatidylserine (LPS), and lysophosphatidylglycerol (LPG). It acts by transphosphatidylation, releasing exclusively cyclic phosphate products as second products. Shows high hemolytic activity. Induces dermonecrosis, vascular permeability, edema, inflammatory response, and platelet aggregation. Also shows cytotoxicity against renal epithelial cells. In addition, also induces hemolysis in a complement-dependent manner and probably also in a complement-independent manner. The hemolysis provoked in a complement-independent manner may be composed of several steps. The toxin may bind to erythrocyte membranes, may hydrolyze membrane phospholipids (SM and LPC) thus generating metabolism products that may cause hemolysis, probably by provoking an increase of calcium inside cells. The calcium influx may be due to the opening of L-type calcium channels, since L-type calcium channel blockers inhibit calcium influx. In vivo, is lethal to mice when intraperitoneally injected. This is Dermonecrotic toxin LiSicTox-alphaIA2aii from Loxosceles intermedia (Brown spider).